A 316-amino-acid chain; its full sequence is Phospho-N-acetylmuramoyl-pentapeptide-transferase (316 aa).

10 helical membrane passes run 5–25 (IIFA…FFIP), 52–72 (TMGG…FSPW), 76–96 (LFIL…DDFL), 116–136 (FLLA…EIIV), 145–165 (LANF…NSVN), 172–192 (GLAA…ALFL), 195–212 (VTYG…LGFL), 221–241 (VFMG…VALL), 244–264 (LPLI…SVIL), and 296–316 (VVYS…YSLS).

Belongs to the glycosyltransferase 4 family. MraY subfamily. It depends on Mg(2+) as a cofactor.

It localises to the cell membrane. It catalyses the reaction UDP-N-acetyl-alpha-D-muramoyl-L-alanyl-gamma-D-glutamyl-meso-2,6-diaminopimeloyl-D-alanyl-D-alanine + di-trans,octa-cis-undecaprenyl phosphate = di-trans,octa-cis-undecaprenyl diphospho-N-acetyl-alpha-D-muramoyl-L-alanyl-D-glutamyl-meso-2,6-diaminopimeloyl-D-alanyl-D-alanine + UMP. Its pathway is cell wall biogenesis; peptidoglycan biosynthesis. Its function is as follows. Catalyzes the initial step of the lipid cycle reactions in the biosynthesis of the cell wall peptidoglycan: transfers peptidoglycan precursor phospho-MurNAc-pentapeptide from UDP-MurNAc-pentapeptide onto the lipid carrier undecaprenyl phosphate, yielding undecaprenyl-pyrophosphoryl-MurNAc-pentapeptide, known as lipid I. In Caldanaerobacter subterraneus subsp. tengcongensis (strain DSM 15242 / JCM 11007 / NBRC 100824 / MB4) (Thermoanaerobacter tengcongensis), this protein is Phospho-N-acetylmuramoyl-pentapeptide-transferase.